We begin with the raw amino-acid sequence, 371 residues long: MAAEQRRSTIFDIVSKCIVQSVLRDISINSEYIESKAKQLCYCPASKKESVINGIYNCCESNIEIMDKEQLLKILDNLRCHSAHVCNATDFWRLYNSLKRFTHTTAFFNTCKPTILATLNTLITLILSNKLLYAAEMVEYLENQLDSSNKSMSQELAELLEMKYALINLVQYRILPMIIGEPIIVAGFSGKEPISDYSAEVERLMELPVKTDIVNTTYDFLARKGIDTSNNIAEYIAGLKIEEIEKVEKYLPEVISTIANSNIIKNKKSIFPANINDKQIMECSRMLDTSEKYSKGYKTDGAVTSPLTGNNTITTFIPISASDMQKFTILEYLYIMRVMANNVKKKNVGKNNGGVVMHINSPFKVINLPKC.

Belongs to the chordopoxvirinae G7 family. In terms of assembly, part of a complex composed of A30, G7, F10 kinase, A15, D2, D3, and J1. In terms of processing, phosphorylated on serines by F10 kinase, phosphorylation state is regulated by H1 phosphatase. Post-translationally, undergoes proteolytic processing during morphogenesis, probably required for the transformation of immature virions (IV) into mature virions (MV).

Its subcellular location is the host cytoplasm. The protein resides in the virion. Functionally, late protein which is a part of a large complex required for early virion morphogenesis. This complex participates in the formation of virosomes and the incorporation of virosomal contents into nascent immature virions. This is Assembly protein G7 from Vaccinia virus (strain Copenhagen) (VACV).